The sequence spans 911 residues: Isoleucine--tRNA ligase (911 aa).

The 'HIGH' region signature appears at 57–67; the sequence is PYANGDIHMGH. Glu-551 contributes to the L-isoleucyl-5'-AMP binding site. The 'KMSKS' region motif lies at 592–596; it reads KMSKS. Lys-595 provides a ligand contact to ATP. Residues Cys-881, Cys-884, Cys-901, and Cys-904 each coordinate Zn(2+).

Belongs to the class-I aminoacyl-tRNA synthetase family. IleS type 1 subfamily. Monomer. It depends on Zn(2+) as a cofactor.

It localises to the cytoplasm. The catalysed reaction is tRNA(Ile) + L-isoleucine + ATP = L-isoleucyl-tRNA(Ile) + AMP + diphosphate. Its function is as follows. Catalyzes the attachment of isoleucine to tRNA(Ile). As IleRS can inadvertently accommodate and process structurally similar amino acids such as valine, to avoid such errors it has two additional distinct tRNA(Ile)-dependent editing activities. One activity is designated as 'pretransfer' editing and involves the hydrolysis of activated Val-AMP. The other activity is designated 'posttransfer' editing and involves deacylation of mischarged Val-tRNA(Ile). This is Isoleucine--tRNA ligase from Exiguobacterium sibiricum (strain DSM 17290 / CCUG 55495 / CIP 109462 / JCM 13490 / 255-15).